Consider the following 156-residue polypeptide: Small ribosomal subunit protein uS7 (156 aa).

This sequence belongs to the universal ribosomal protein uS7 family. In terms of assembly, part of the 30S ribosomal subunit. Contacts proteins S9 and S11.

Functionally, one of the primary rRNA binding proteins, it binds directly to 16S rRNA where it nucleates assembly of the head domain of the 30S subunit. Is located at the subunit interface close to the decoding center, probably blocks exit of the E-site tRNA. This chain is Small ribosomal subunit protein uS7, found in Chlorobaculum tepidum (strain ATCC 49652 / DSM 12025 / NBRC 103806 / TLS) (Chlorobium tepidum).